Consider the following 697-residue polypeptide: Elongation factor G 2 (697 aa).

The tr-type G domain occupies 5–280 (SLYRNIGIFA…AVVDYLPSPT (276 aa)). Residues 14–21 (AHVDAGKT), 78–82 (DTPGH), and 132–135 (NKLD) each bind GTP.

Belongs to the TRAFAC class translation factor GTPase superfamily. Classic translation factor GTPase family. EF-G/EF-2 subfamily.

It localises to the cytoplasm. Functionally, catalyzes the GTP-dependent ribosomal translocation step during translation elongation. During this step, the ribosome changes from the pre-translocational (PRE) to the post-translocational (POST) state as the newly formed A-site-bound peptidyl-tRNA and P-site-bound deacylated tRNA move to the P and E sites, respectively. Catalyzes the coordinated movement of the two tRNA molecules, the mRNA and conformational changes in the ribosome. This Saccharophagus degradans (strain 2-40 / ATCC 43961 / DSM 17024) protein is Elongation factor G 2.